Here is a 517-residue protein sequence, read N- to C-terminus: Glutamate--cysteine ligase (517 aa).

This sequence belongs to the glutamate--cysteine ligase type 1 family. Type 1 subfamily.

The enzyme catalyses L-cysteine + L-glutamate + ATP = gamma-L-glutamyl-L-cysteine + ADP + phosphate + H(+). It functions in the pathway sulfur metabolism; glutathione biosynthesis; glutathione from L-cysteine and L-glutamate: step 1/2. In Pectobacterium atrosepticum (strain SCRI 1043 / ATCC BAA-672) (Erwinia carotovora subsp. atroseptica), this protein is Glutamate--cysteine ligase.